The primary structure comprises 64 residues: DNA gyrase inhibitor YacG (64 aa).

Cysteine 10, cysteine 13, cysteine 29, and cysteine 33 together coordinate Zn(2+).

This sequence belongs to the DNA gyrase inhibitor YacG family. Interacts with GyrB. The cofactor is Zn(2+).

Functionally, inhibits all the catalytic activities of DNA gyrase by preventing its interaction with DNA. Acts by binding directly to the C-terminal domain of GyrB, which probably disrupts DNA binding by the gyrase. In Pectobacterium carotovorum subsp. carotovorum (strain PC1), this protein is DNA gyrase inhibitor YacG.